A 210-amino-acid chain; its full sequence is Probable glutathione peroxidase 8 (210 aa).

A helical membrane pass occupies residues 13–35 (ASRAGLFKVLLSVALCMGSLYLL).

The protein belongs to the glutathione peroxidase family.

The protein localises to the membrane. The catalysed reaction is 2 glutathione + H2O2 = glutathione disulfide + 2 H2O. The protein is Probable glutathione peroxidase 8 (gpx8) of Danio rerio (Zebrafish).